A 114-amino-acid chain; its full sequence is Large ribosomal subunit protein P2 (114 aa).

A disordered region spans residues 84-114; it reads TDALQAGSKKGETKEGPKEESDEDMGFGLFD. Residues 92–102 show a composition bias toward basic and acidic residues; the sequence is KKGETKEGPKE.

This sequence belongs to the eukaryotic ribosomal protein P1/P2 family. In terms of assembly, P1 and P2 exist as dimers at the large ribosomal subunit. In terms of processing, phosphorylated.

Its function is as follows. Plays an important role in the elongation step of protein synthesis. The protein is Large ribosomal subunit protein P2 (rpp-2) of Brugia malayi (Filarial nematode worm).